Here is a 319-residue protein sequence, read N- to C-terminus: tRNA-cytidine(32) 2-sulfurtransferase (319 aa).

The PP-loop motif signature appears at 43-48 (SGGKDS). Cysteine 118, cysteine 121, and cysteine 209 together coordinate [4Fe-4S] cluster.

It belongs to the TtcA family. In terms of assembly, homodimer. Requires Mg(2+) as cofactor. It depends on [4Fe-4S] cluster as a cofactor.

It localises to the cytoplasm. It catalyses the reaction cytidine(32) in tRNA + S-sulfanyl-L-cysteinyl-[cysteine desulfurase] + AH2 + ATP = 2-thiocytidine(32) in tRNA + L-cysteinyl-[cysteine desulfurase] + A + AMP + diphosphate + H(+). Its pathway is tRNA modification. Its function is as follows. Catalyzes the ATP-dependent 2-thiolation of cytidine in position 32 of tRNA, to form 2-thiocytidine (s(2)C32). The sulfur atoms are provided by the cysteine/cysteine desulfurase (IscS) system. This chain is tRNA-cytidine(32) 2-sulfurtransferase, found in Neisseria meningitidis serogroup C / serotype 2a (strain ATCC 700532 / DSM 15464 / FAM18).